Here is a 527-residue protein sequence, read N- to C-terminus: T-complex protein 1 subunit beta (527 aa).

S2 bears the N-acetylserine mark.

It belongs to the TCP-1 chaperonin family. In terms of assembly, heterooligomeric complex of about 850 to 900 kDa that forms two stacked rings, 12 to 16 nm in diameter. Interacts with PLP2; this interaction leads to inhibition of CCT complex mediated actin folding.

The protein resides in the cytoplasm. Functionally, molecular chaperone; assists the folding of proteins upon ATP hydrolysis. Known to play a role, in vitro, in the folding of actin and tubulin. In yeast may play a role in mitotic spindle formation. This chain is T-complex protein 1 subunit beta (CCT2), found in Saccharomyces cerevisiae (strain ATCC 204508 / S288c) (Baker's yeast).